Reading from the N-terminus, the 251-residue chain is Triosephosphate isomerase (251 aa).

10–12 contributes to the substrate binding site; it reads NWK. Residue H95 is the Electrophile of the active site. Residue E167 is the Proton acceptor of the active site. Residues G173, S213, and 234–235 each bind substrate; that span reads GG.

It belongs to the triosephosphate isomerase family. Homodimer.

It localises to the cytoplasm. It catalyses the reaction D-glyceraldehyde 3-phosphate = dihydroxyacetone phosphate. It participates in carbohydrate biosynthesis; gluconeogenesis. It functions in the pathway carbohydrate degradation; glycolysis; D-glyceraldehyde 3-phosphate from glycerone phosphate: step 1/1. In terms of biological role, involved in the gluconeogenesis. Catalyzes stereospecifically the conversion of dihydroxyacetone phosphate (DHAP) to D-glyceraldehyde-3-phosphate (G3P). In Acetivibrio thermocellus (strain ATCC 27405 / DSM 1237 / JCM 9322 / NBRC 103400 / NCIMB 10682 / NRRL B-4536 / VPI 7372) (Clostridium thermocellum), this protein is Triosephosphate isomerase.